The following is a 530-amino-acid chain: GMP synthase [glutamine-hydrolyzing] (530 aa).

The region spanning 4–205 is the Glutamine amidotransferase type-1 domain; it reads RILILDYGSQ…VKDICGCEGD (202 aa). Catalysis depends on cysteine 84, which acts as the Nucleophile. Active-site residues include histidine 179 and glutamate 181. The GMPS ATP-PPase domain occupies 206 to 398; sequence WNMPDYISEA…LGLPPQMVYR (193 aa). 233–239 contacts ATP; sequence SGGVDSS.

In terms of assembly, homodimer.

The enzyme catalyses XMP + L-glutamine + ATP + H2O = GMP + L-glutamate + AMP + diphosphate + 2 H(+). It functions in the pathway purine metabolism; GMP biosynthesis; GMP from XMP (L-Gln route): step 1/1. Catalyzes the synthesis of GMP from XMP. The polypeptide is GMP synthase [glutamine-hydrolyzing] (Bordetella bronchiseptica (strain ATCC BAA-588 / NCTC 13252 / RB50) (Alcaligenes bronchisepticus)).